A 400-amino-acid chain; its full sequence is Na(+)/H(+) antiporter NhaA (400 aa).

Transmembrane regions (helical) follow at residues 26-46 (AGGI…NSPL), 71-91 (LIHW…GMEV), 107-127 (IFPA…YWFI), 137-157 (GWAI…ALLS), 166-186 (IFLL…IALF), 189-209 (HGLS…LILL), 212-232 (FKVS…ASVL), 233-253 (KSGV…PLKG), 273-293 (FVIL…GIDV), 299-319 (PLLL…IFGF), 340-360 (IFAV…LASL), and 373-393 (LSRL…YLFL).

Belongs to the NhaA Na(+)/H(+) (TC 2.A.33) antiporter family.

It localises to the cell inner membrane. It carries out the reaction Na(+)(in) + 2 H(+)(out) = Na(+)(out) + 2 H(+)(in). Functionally, na(+)/H(+) antiporter that extrudes sodium in exchange for external protons. This is Na(+)/H(+) antiporter NhaA from Haemophilus influenzae (strain 86-028NP).